The sequence spans 264 residues: Thymidylate synthase (264 aa).

DUMP is bound at residue Arg21. (6R)-5,10-methylene-5,6,7,8-tetrahydrofolate is bound at residue His51. 126-127 (RR) is a binding site for dUMP. Cys146 serves as the catalytic Nucleophile. DUMP contacts are provided by residues 166–169 (RSCD), Asn177, and 207–209 (HLY). (6R)-5,10-methylene-5,6,7,8-tetrahydrofolate is bound at residue Asp169. Ser263 contributes to the (6R)-5,10-methylene-5,6,7,8-tetrahydrofolate binding site.

This sequence belongs to the thymidylate synthase family. Bacterial-type ThyA subfamily. Homodimer.

The protein localises to the cytoplasm. It catalyses the reaction dUMP + (6R)-5,10-methylene-5,6,7,8-tetrahydrofolate = 7,8-dihydrofolate + dTMP. It participates in pyrimidine metabolism; dTTP biosynthesis. Catalyzes the reductive methylation of 2'-deoxyuridine-5'-monophosphate (dUMP) to 2'-deoxythymidine-5'-monophosphate (dTMP) while utilizing 5,10-methylenetetrahydrofolate (mTHF) as the methyl donor and reductant in the reaction, yielding dihydrofolate (DHF) as a by-product. This enzymatic reaction provides an intracellular de novo source of dTMP, an essential precursor for DNA biosynthesis. The polypeptide is Thymidylate synthase (Buchnera aphidicola subsp. Schizaphis graminum (strain Sg)).